The chain runs to 745 residues: Protein transport protein SEC23 D (745 aa).

Zn(2+)-binding residues include C53, C56, C73, and C76. Residues 53 to 76 form a zinc finger-like region; it reads CENCYAYFNTYCELDQWAWNCSLC.

Belongs to the SEC23/SEC24 family. SEC24 subfamily. In terms of assembly, component of the coat protein complex II (COPII), composed of at least five proteins: the Sec23/24 complex, the Sec13/31 complex and Sar1. Mostly expressed in closed floral bud, pollen and flowers, and, to a lower extent, in mature siliques, roots and leaf primordia.

It is found in the cytoplasmic vesicle. Its subcellular location is the COPII-coated vesicle membrane. The protein localises to the endoplasmic reticulum membrane. The protein resides in the membrane. Its function is as follows. Component of the coat protein complex II (COPII) which promotes the formation of transport vesicles from the endoplasmic reticulum (ER). The coat has two main functions, the physical deformation of the endoplasmic reticulum membrane into vesicles and the selection of cargo molecules. May contribute to COPII-coated vesicles formation and ER-Golgi vesicle transport. Together with SEC23A, essential for pollen wall development and exine patterning, probably by regulating endoplasmic reticulum (ER) export of lipids and proteins (e.g. sporopollenin) necessary for pollen wall formation. Also involved in plastid physiology in anther tapetal cells. In Arabidopsis thaliana (Mouse-ear cress), this protein is Protein transport protein SEC23 D.